The chain runs to 238 residues: uncharacterized protein (238 aa).

This is an uncharacterized protein from Haemophilus influenzae (strain ATCC 51907 / DSM 11121 / KW20 / Rd).